The chain runs to 573 residues: Hemagglutinin-neuraminidase (573 aa).

The Intravirion portion of the chain corresponds to 1–27; the sequence is MQDSHGNTQILNQANSMVKRTWRLLFR. The chain crosses the membrane as a helical span at residues 28–48; sequence IATLILLVSIFVLSLIIVLQS. At 49-573 the chain is on the virion surface side; it reads TPGNLQNDIN…DFQITLFLAA (525 aa). 3 cysteine pairs are disulfide-bonded: Cys173/Cys197, Cys187/Cys248, and Cys239/Cys252. Positions 235 to 240 are involved in neuraminidase activity; that stretch reads NRKSCS. 4 N-linked (GlcNAc...) asparagine; by host glycosylation sites follow: Asn258, Asn330, Asn339, and Asn347. Intrachain disulfides connect Cys345-Cys466, Cys377-Cys387, and Cys460-Cys470. A glycan (N-linked (GlcNAc...) asparagine; by host) is linked at Asn433. 2 N-linked (GlcNAc...) asparagine; by host glycosylation sites follow: Asn502 and Asn530. Cysteines 540 and 551 form a disulfide.

Belongs to the paramyxoviruses hemagglutinin-neuraminidase family. In terms of assembly, homotetramer; composed of disulfide-linked homodimers. Interacts with F protein trimer.

The protein resides in the virion membrane. It localises to the host cell membrane. It catalyses the reaction Hydrolysis of alpha-(2-&gt;3)-, alpha-(2-&gt;6)-, alpha-(2-&gt;8)- glycosidic linkages of terminal sialic acid residues in oligosaccharides, glycoproteins, glycolipids, colominic acid and synthetic substrates.. Attaches the virus to sialic acid-containing cell receptors and thereby initiating infection. Binding of HN protein to the receptor induces a conformational change that allows the F protein to trigger virion/cell membranes fusion. Functionally, neuraminidase activity ensures the efficient spread of the virus by dissociating the mature virions from the neuraminic acid containing glycoproteins. The chain is Hemagglutinin-neuraminidase (HN) from Homo sapiens (Human).